The primary structure comprises 277 residues: Myelin proteolipid protein (277 aa).

Residues 1 to 10 (MGLLECCARC) lie on the Cytoplasmic side of the membrane. S-palmitoyl cysteine attachment occurs at residues C6, C7, and C10. The helical transmembrane segment at 11–36 (LVGAPFASLVATGLCFFGVALFCGCG) threads the bilayer. Residues 37–59 (HEALTGTEKLIETYFSKNYQDYE) lie on the Extracellular side of the membrane. A helical membrane pass occupies residues 60-88 (YLINVIHAFQYVIYGTASFFFLYGALLLA). Over 89–151 (EGFYTTGAVR…LGKWLGHPDK (63 aa)) the chain is Cytoplasmic. Residue C109 is the site of S-palmitoyl cysteine attachment. Phosphoserine is present on S114. 2 positions are modified to phosphothreonine: T116 and T118. A lipid anchor (S-palmitoyl cysteine) is attached at C141. Residues 152-178 (FVGITYALTVVWLLVFACSAVPVYIYF) form a helical membrane-spanning segment. At 179 to 238 (NTWTTCQSIAFPSKTSASIGSLCADARMYGVLPWNAFPGKVCGSNLLSICKTAEFQMTFH) the chain is on the extracellular side. 2 disulfides stabilise this stretch: C184–C228 and C201–C220. Residue S199 is the site of O-palmitoyl serine attachment. The chain crosses the membrane as a helical span at residues 239 to 268 (LFIAAFVGAAATLISLLTFMIAATYNFAVL). Over 269 to 277 (KLMGRGTKF) the chain is Cytoplasmic.

The protein belongs to the myelin proteolipid protein family.

The protein localises to the cell membrane. Its subcellular location is the myelin membrane. Functionally, this is the major myelin protein from the central nervous system. It plays an important role in the formation or maintenance of the multilamellar structure of myelin. The polypeptide is Myelin proteolipid protein (PLP1) (Macaca fascicularis (Crab-eating macaque)).